The following is a 293-amino-acid chain: 4-hydroxybenzoate octaprenyltransferase (293 aa).

A run of 8 helical transmembrane segments spans residues P19–G39, W43–V63, L95–V115, F135–Y155, L158–I178, L209–L229, D231–L251, and F266–L286.

Belongs to the UbiA prenyltransferase family. Mg(2+) serves as cofactor.

It localises to the cell inner membrane. It carries out the reaction all-trans-octaprenyl diphosphate + 4-hydroxybenzoate = 4-hydroxy-3-(all-trans-octaprenyl)benzoate + diphosphate. The protein operates within cofactor biosynthesis; ubiquinone biosynthesis. In terms of biological role, catalyzes the prenylation of para-hydroxybenzoate (PHB) with an all-trans polyprenyl group. Mediates the second step in the final reaction sequence of ubiquinone-8 (UQ-8) biosynthesis, which is the condensation of the polyisoprenoid side chain with PHB, generating the first membrane-bound Q intermediate 3-octaprenyl-4-hydroxybenzoate. This Thiobacillus denitrificans (strain ATCC 25259 / T1) protein is 4-hydroxybenzoate octaprenyltransferase.